An 87-amino-acid polypeptide reads, in one-letter code: Large ribosomal subunit protein bL27 (87 aa).

The disordered stretch occupies residues 1-23 (MAHKKGTGSTRNGRDSNAQRLGV). Over residues 7 to 19 (TGSTRNGRDSNAQ) the composition is skewed to polar residues.

Belongs to the bacterial ribosomal protein bL27 family.

The protein is Large ribosomal subunit protein bL27 (rpmA) of Synechocystis sp. (strain ATCC 27184 / PCC 6803 / Kazusa).